The following is a 348-amino-acid chain: Phenylalanine--tRNA ligase alpha subunit (348 aa).

A Mg(2+)-binding site is contributed by glutamate 262.

This sequence belongs to the class-II aminoacyl-tRNA synthetase family. Phe-tRNA synthetase alpha subunit type 1 subfamily. In terms of assembly, tetramer of two alpha and two beta subunits. It depends on Mg(2+) as a cofactor.

Its subcellular location is the cytoplasm. It catalyses the reaction tRNA(Phe) + L-phenylalanine + ATP = L-phenylalanyl-tRNA(Phe) + AMP + diphosphate + H(+). The sequence is that of Phenylalanine--tRNA ligase alpha subunit from Streptococcus pneumoniae (strain JJA).